The primary structure comprises 137 residues: Ribonuclease VapC18 (137 aa).

One can recognise a PINc domain in the interval 4–126; it reads CVDTSAWHHA…YDRVAAITGQ (123 aa). Mg(2+) is bound by residues D6 and D96.

It belongs to the PINc/VapC protein family. Mg(2+) is required as a cofactor.

In terms of biological role, toxic component of a type II toxin-antitoxin (TA) system. An RNase. The cognate antitoxin is VapB18. The chain is Ribonuclease VapC18 from Mycobacterium tuberculosis (strain ATCC 25618 / H37Rv).